Consider the following 363-residue polypeptide: MKKKYRIAVLPGDGIGPEVMREAYKILNILKNHFSLPLETREFNIGGSAIDQEGTALPKKTLLGCENSDAILFGSVGGKKWDDLPINQRPERASLLPLRKHFNLFANLRPAKLYSELKYLSPLRSDIIKNGFDILCIRELTGGLYFGKPTGRLKKNNIEYAFDTEIYYNYEITRIAHLAFQLAQTRNFKICSIDKSNVLNSSVLWREIVKKVSKNYPDVHLSHLYIDNATMQIIKDPNQFDILLCSNLFGDIISDECAIITGSIGMLPSASLNEKKFGLYEPAGGSAPDIEGKNIANPIAQILSVSMLVRYGMNLKTIADKIDQSVISVLKKGYRTADISNNNNYLKTNEMGDVIANTLISGE.

78-91 (GKKWDDLPINQRPE) lines the NAD(+) pocket. The substrate site is built by Arg-99, Arg-109, Arg-138, and Asp-227. Mg(2+) contacts are provided by Asp-227, Asp-251, and Asp-255. Residue 285-297 (GSAPDIEGKNIAN) coordinates NAD(+).

It belongs to the isocitrate and isopropylmalate dehydrogenases family. LeuB type 1 subfamily. In terms of assembly, homodimer. Mg(2+) serves as cofactor. The cofactor is Mn(2+).

The protein resides in the cytoplasm. The catalysed reaction is (2R,3S)-3-isopropylmalate + NAD(+) = 4-methyl-2-oxopentanoate + CO2 + NADH. It participates in amino-acid biosynthesis; L-leucine biosynthesis; L-leucine from 3-methyl-2-oxobutanoate: step 3/4. Its function is as follows. Catalyzes the oxidation of 3-carboxy-2-hydroxy-4-methylpentanoate (3-isopropylmalate) to 3-carboxy-4-methyl-2-oxopentanoate. The product decarboxylates to 4-methyl-2 oxopentanoate. This Buchnera aphidicola subsp. Uroleucon rudbeckiae protein is 3-isopropylmalate dehydrogenase.